A 173-amino-acid chain; its full sequence is ATP-dependent protease subunit HslV (173 aa).

The active site involves threonine 2. The Na(+) site is built by glycine 158, aspartate 161, and threonine 164.

It belongs to the peptidase T1B family. HslV subfamily. A double ring-shaped homohexamer of HslV is capped on each side by a ring-shaped HslU homohexamer. The assembly of the HslU/HslV complex is dependent on binding of ATP.

It localises to the cytoplasm. The enzyme catalyses ATP-dependent cleavage of peptide bonds with broad specificity.. With respect to regulation, allosterically activated by HslU binding. In terms of biological role, protease subunit of a proteasome-like degradation complex believed to be a general protein degrading machinery. The sequence is that of ATP-dependent protease subunit HslV from Mannheimia succiniciproducens (strain KCTC 0769BP / MBEL55E).